A 528-amino-acid chain; its full sequence is Na(+)/H(+) antiporter NhaB (528 aa).

Transmembrane regions (helical) follow at residues 28–50 (FLVI…VLVV), 67–87 (PGGL…SQVL), 98–118 (LLLV…LFVF), 140–160 (AFLS…AVAV), 240–260 (FFLR…FTCF), 305–325 (ALIG…VGLI), 350–370 (EEAL…GVII), 391–411 (LVIF…VFVG), 449–469 (ATPN…APLI), and 476–496 (MVWM…MAIE).

This sequence belongs to the NhaB Na(+)/H(+) (TC 2.A.34) antiporter family.

Its subcellular location is the cell inner membrane. It carries out the reaction 2 Na(+)(in) + 3 H(+)(out) = 2 Na(+)(out) + 3 H(+)(in). Functionally, na(+)/H(+) antiporter that extrudes sodium in exchange for external protons. The polypeptide is Na(+)/H(+) antiporter NhaB (Shewanella frigidimarina (strain NCIMB 400)).